Here is a 356-residue protein sequence, read N- to C-terminus: 1,2-phenylacetyl-CoA epoxidase, subunit E (356 aa).

Positions 2–106 (TTFHSLTVAK…MVPQGHFGYQ (105 aa)) constitute an FAD-binding FR-type domain. The oxidoreductase stretch occupies residues 112-228 (QGRYLAIAAG…AAMMDDAETA (117 aa)). The 93-residue stretch at 262-354 (QKVTVRQDGR…DVVVDFDAKG (93 aa)) folds into the 2Fe-2S ferredoxin-type domain. Residues Cys299, Cys304, Cys307, and Cys337 each contribute to the [2Fe-2S] cluster site.

In the N-terminal section; belongs to the FAD-binding oxidoreductase type 6 family. The cofactor is [2Fe-2S] cluster. Requires FAD as cofactor.

It functions in the pathway aromatic compound metabolism; phenylacetate degradation. Its function is as follows. Component of 1,2-phenylacetyl-CoA epoxidase multicomponent enzyme system which catalyzes the reduction of phenylacetyl-CoA (PA-CoA) to form 1,2-epoxyphenylacetyl-CoA. The subunit E is a reductase with a preference for NADPH and FAD, capable of reducing cytochrome c. The sequence is that of 1,2-phenylacetyl-CoA epoxidase, subunit E (paaE) from Escherichia coli (strain K12).